Consider the following 101-residue polypeptide: Small ribosomal subunit protein cS23 (101 aa).

It belongs to the chloroplast-specific ribosomal protein cS23 family. In terms of assembly, part of the 30S ribosomal subunit.

The protein resides in the plastid. The protein localises to the chloroplast. In terms of biological role, probably a ribosomal protein or a ribosome-associated protein. The polypeptide is Small ribosomal subunit protein cS23 (ycf65) (Euglena mutabilis).